We begin with the raw amino-acid sequence, 603 residues long: Adenine deaminase 1 (603 aa).

Belongs to the metallo-dependent hydrolases superfamily. Adenine deaminase family. Requires Mn(2+) as cofactor.

The enzyme catalyses adenine + H2O + H(+) = hypoxanthine + NH4(+). The polypeptide is Adenine deaminase 1 (Carboxydothermus hydrogenoformans (strain ATCC BAA-161 / DSM 6008 / Z-2901)).